We begin with the raw amino-acid sequence, 211 residues long: SsrA-binding protein (211 aa).

Disordered regions lie at residues 1 to 20 (MHRR…PERS) and 170 to 211 (RLRR…RHEN). The span at 177 to 187 (QRNTQRSVTPR) shows a compositional bias: polar residues.

This sequence belongs to the SmpB family.

It localises to the cytoplasm. Required for rescue of stalled ribosomes mediated by trans-translation. Binds to transfer-messenger RNA (tmRNA), required for stable association of tmRNA with ribosomes. tmRNA and SmpB together mimic tRNA shape, replacing the anticodon stem-loop with SmpB. tmRNA is encoded by the ssrA gene; the 2 termini fold to resemble tRNA(Ala) and it encodes a 'tag peptide', a short internal open reading frame. During trans-translation Ala-aminoacylated tmRNA acts like a tRNA, entering the A-site of stalled ribosomes, displacing the stalled mRNA. The ribosome then switches to translate the ORF on the tmRNA; the nascent peptide is terminated with the 'tag peptide' encoded by the tmRNA and targeted for degradation. The ribosome is freed to recommence translation, which seems to be the essential function of trans-translation. The sequence is that of SsrA-binding protein from Tropheryma whipplei (strain TW08/27) (Whipple's bacillus).